The sequence spans 318 residues: Acetyl-coenzyme A carboxylase carboxyl transferase subunit alpha (318 aa).

Residues 39–292 (LTDKSEKQLR…GDSIAAELPD (254 aa)) form the CoA carboxyltransferase C-terminal domain.

This sequence belongs to the AccA family. Acetyl-CoA carboxylase is a heterohexamer composed of biotin carboxyl carrier protein (AccB), biotin carboxylase (AccC) and two subunits each of ACCase subunit alpha (AccA) and ACCase subunit beta (AccD).

The protein localises to the cytoplasm. The catalysed reaction is N(6)-carboxybiotinyl-L-lysyl-[protein] + acetyl-CoA = N(6)-biotinyl-L-lysyl-[protein] + malonyl-CoA. It participates in lipid metabolism; malonyl-CoA biosynthesis; malonyl-CoA from acetyl-CoA: step 1/1. Its function is as follows. Component of the acetyl coenzyme A carboxylase (ACC) complex. First, biotin carboxylase catalyzes the carboxylation of biotin on its carrier protein (BCCP) and then the CO(2) group is transferred by the carboxyltransferase to acetyl-CoA to form malonyl-CoA. The polypeptide is Acetyl-coenzyme A carboxylase carboxyl transferase subunit alpha (Gluconacetobacter diazotrophicus (strain ATCC 49037 / DSM 5601 / CCUG 37298 / CIP 103539 / LMG 7603 / PAl5)).